A 369-amino-acid polypeptide reads, in one-letter code: Transmembrane protein 144 homolog A (369 aa).

Helical transmembrane passes span 6–26 (VIGY…YVPV), 35–55 (LSYA…AMMI), 63–83 (PIGI…IPII), 85–105 (LVGL…VGFF), 122–142 (DWMN…FFFI), 221–241 (VAGI…MIPM), 256–276 (IIFS…MFYA), 288–308 (TVFP…GLMI), 318–338 (GYPI…VFYF), and 347–367 (LLIL…LAFS).

Belongs to the TMEM144 family.

It is found in the membrane. This is Transmembrane protein 144 homolog A (tmem144A) from Dictyostelium discoideum (Social amoeba).